Reading from the N-terminus, the 127-residue chain is uncharacterized protein (127 aa).

Residues phenylalanine 71–lysine 126 are a coiled coil.

This is an uncharacterized protein from Aquifex aeolicus (strain VF5).